A 306-amino-acid polypeptide reads, in one-letter code: Prophage bactoprenol glucosyl transferase homolog (306 aa).

Residues 1 to 227 lie on the Cytoplasmic side of the membrane; it reads MKISLVVPVF…ITSFSTFPLR (227 aa). Residues 228 to 248 form a helical membrane-spanning segment; sequence IWTYIGLVVASVAFIYGAWMI. Residues 249–262 are Periplasmic-facing; sequence LDTIIFGNAVRGYP. A helical transmembrane segment spans residues 263 to 283; that stretch reads SLLVSILFLGGIQMIGIGVLG. Residues 284–306 lie on the Cytoplasmic side of the membrane; it reads EYIGRTYIETKKRPKYIIKRVKK.

This sequence belongs to the glycosyltransferase 2 family. GtrB subfamily.

It localises to the cell inner membrane. In terms of biological role, involved in O antigen modification. Catalyzes the transfer of the glucose residue from UDP-glucose to a lipid carrier. The protein is Prophage bactoprenol glucosyl transferase homolog (yfdH) of Escherichia coli (strain K12).